The following is a 189-amino-acid chain: Potassium-transporting ATPase KdpC subunit (189 aa).

Residues 6–26 (PAIMMVLVFTIICGGIYPAVV) form a helical membrane-spanning segment.

It belongs to the KdpC family. As to quaternary structure, the system is composed of three essential subunits: KdpA, KdpB and KdpC.

The protein localises to the cell inner membrane. Its function is as follows. Part of the high-affinity ATP-driven potassium transport (or Kdp) system, which catalyzes the hydrolysis of ATP coupled with the electrogenic transport of potassium into the cytoplasm. This subunit acts as a catalytic chaperone that increases the ATP-binding affinity of the ATP-hydrolyzing subunit KdpB by the formation of a transient KdpB/KdpC/ATP ternary complex. This Geobacter metallireducens (strain ATCC 53774 / DSM 7210 / GS-15) protein is Potassium-transporting ATPase KdpC subunit.